The chain runs to 377 residues: Gastricsin (377 aa).

The first 5 residues, Gln-1–Ala-5, serve as a signal peptide directing secretion. Propeptides (activation peptide) lie at residues Ala-6–Phe-31 and Leu-32–Leu-48. Residues Tyr-62–Ala-374 form the Peptidase A1 domain. Asp-80 is a catalytic residue. Disulfide bonds link Cys-93–Cys-98 and Cys-256–Cys-260. Asp-265 is an active-site residue. A disulfide bridge links Cys-299 with Cys-332.

It belongs to the peptidase A1 family. Post-translationally, each pepsinogen is converted to corresponding pepsin at pH 2.0 in part as a result of the release of a 47 AA activation segment and in part as a result of stepwise proteolytic cleavage via an intermediate form(s).

The protein resides in the secreted. The enzyme catalyses More restricted specificity than pepsin A, but shows preferential cleavage at Tyr-|-Xaa bonds. High activity on hemoglobin.. Functionally, hydrolyzes a variety of proteins. This chain is Gastricsin (PGC), found in Macaca fuscata fuscata (Japanese macaque).